Reading from the N-terminus, the 933-residue chain is Potassium voltage-gated channel subfamily KQT member 5 (933 aa).

At 1 to 126 the chain is on the cytoplasmic side; sequence MPRHHAGGEE…YNVLERPRGW (126 aa). At serine 89 the chain carries Phosphoserine. Residues 127–147 form a helical membrane-spanning segment; sequence AFVYHAFVFLLVFGCLILSVF. The Extracellular segment spans residues 148–157; that stretch reads STIPEHTKLA. The chain crosses the membrane as a helical span at residues 158-178; that stretch reads SSCLLILEFVMIVVFGLEFII. The Cytoplasmic portion of the chain corresponds to 179 to 201; that stretch reads RIWSAGCCCRYRGWQGRLRFARK. The chain crosses the membrane as a helical span at residues 202 to 222; sequence PFCVIDTIVLIASIAVVSAKT. Residues 223-230 lie on the Extracellular side of the membrane; that stretch reads QGNIFATS. A helical; Voltage-sensor membrane pass occupies residues 231–253; it reads ALRSLRFLQILRMVRMDRRGGTW. A 1,2-diacyl-sn-glycero-3-phospho-(1D-myo-inositol-4,5-bisphosphate) contacts are provided by arginine 249 and lysine 265. Residues 254-267 lie on the Cytoplasmic side of the membrane; that stretch reads KLLGSVVYAHSKEL. Residues 268–288 form a helical membrane-spanning segment; that stretch reads ITAWYIGFLVLIFSSFLVYLV. Residues 289–299 are Extracellular-facing; it reads EKDANKEFSTY. The segment at residues 300–320 is an intramembrane region (pore-forming); that stretch reads ADALWWGTITLTTIGYGDKTP. The Extracellular segment spans residues 321–326; that stretch reads LTWLGR. A helical transmembrane segment spans residues 327 to 347; sequence LLSAGFALLGISFFALPAGIL. Topologically, residues 348–933 are cytoplasmic; the sequence is GSGFALKVQE…ALSLPHVKLN (586 aa). A 1,2-diacyl-sn-glycero-3-phospho-(1D-myo-inositol-4,5-bisphosphate) is bound at residue lysine 362. The tract at residues 371-379 is interaction with CALM; that stretch reads AANLIQCVW. The disordered stretch occupies residues 405–465; the sequence is SPTKKEQGEA…EGSPTKVQKS (61 aa). Residues 432 to 441 show a composition bias toward polar residues; sequence RGQSIKSRQA. Serine 448 is modified (phosphoserine). The interval 522–529 is interaction with CALM; the sequence is VIRAIRIM. Positions 578-598 are disordered; that stretch reads KGQMTSDKKSREKITAEHETT. The segment covering 583 to 598 has biased composition (basic and acidic residues); sequence SDKKSREKITAEHETT. At serine 832 the chain carries Phosphoserine. The tract at residues 878 to 933 is disordered; sequence GAEETETDTFDGTPPPAGEAAFSSDSLRTGRSRSSQNICKTGDSTDALSLPHVKLN. Over residues 900–924 the composition is skewed to polar residues; that stretch reads SSDSLRTGRSRSSQNICKTGDSTDA.

It belongs to the potassium channel family. KQT (TC 1.A.1.15) subfamily. Kv7.5/KCNQ5 sub-subfamily. Homotetramer; forms a functional homotetrameric channel resulting in the expression of a small M-current. Heterotetramer with KCNQ3; forms heterotetrameric M-channel responsible for the native M-current. Heterotetramer with KCNQ1; forms a functional voltage-gated potassium channel. Interacts (via C-terminus) with calmodulin/CALM; forms a heterooctameric structure (with 4:4 KCNQ1:CALM stoichiometry); the interaction is calcium-independent, constitutive and participates in the channel function. Strongly expressed in brain. Also expressed in colon, lung and uterus.

It is found in the cell membrane. It catalyses the reaction K(+)(in) = K(+)(out). With respect to regulation, phosphatidylinositol-4,5-bisphosphate (PIP2) is essential to activate KCNQ5 channel by inducing the coupling of the voltage-sensing domain (VSD) and the pore-forming domain (PD). Calcium suppresses KCNQ5 channel current through calcium-bound CALM C-terminus. Therefore CALM acts as calcium sensor that controls channel activity. Zinc potentiates channel activity in a pH-dependent manner. The activity is modulated by small changes in cell volume. Activated by the anticonvulsant retigabine. Inhibited by linopirdine and XE991. Pore-forming subunit of the voltage-gated potassium (Kv) channel broadly expressed in brain and skeletal muscle and involved in the regulation of neuronal excitability. Associates with KCNQ3/Kv7.3 pore-forming subunit to form a potassium channel which contributes to M-type current, a slowly activating and deactivating potassium conductance which plays a critical role in determining the subthreshold electrical excitability of neurons. Contributes, with other potassium channels, to the molecular diversity of a heterogeneous population of M-channels, varying in kinetic and pharmacological properties, which underlie this physiologically important current. Also forms a functional channel with KCNQ1/Kv7.1 subunit that may contribute to vasoconstriction and hypertension. Channel may be selectively permeable in vitro to other cations besides potassium, in decreasing order of affinity K(+) = Rb(+) &gt; Cs(+) &gt; Na(+). The chain is Potassium voltage-gated channel subfamily KQT member 5 from Mus musculus (Mouse).